We begin with the raw amino-acid sequence, 448 residues long: Asparagine--tRNA ligase (448 aa).

This sequence belongs to the class-II aminoacyl-tRNA synthetase family. As to quaternary structure, homodimer.

Its subcellular location is the cytoplasm. The catalysed reaction is tRNA(Asn) + L-asparagine + ATP = L-asparaginyl-tRNA(Asn) + AMP + diphosphate + H(+). The sequence is that of Asparagine--tRNA ligase from Streptococcus thermophilus (strain CNRZ 1066).